A 215-amino-acid chain; its full sequence is Ribose-5-phosphate isomerase A (215 aa).

Substrate is bound by residues 26–29, 79–82, and 92–95; these read TGST, DGAD, and KGGG. Glu101 serves as the catalytic Proton acceptor. Residue Lys119 coordinates substrate.

It belongs to the ribose 5-phosphate isomerase family. In terms of assembly, homodimer.

It catalyses the reaction aldehydo-D-ribose 5-phosphate = D-ribulose 5-phosphate. Its pathway is carbohydrate degradation; pentose phosphate pathway; D-ribose 5-phosphate from D-ribulose 5-phosphate (non-oxidative stage): step 1/1. Functionally, catalyzes the reversible conversion of ribose-5-phosphate to ribulose 5-phosphate. The polypeptide is Ribose-5-phosphate isomerase A (Xanthomonas oryzae pv. oryzae (strain PXO99A)).